The sequence spans 492 residues: Bifunctional purine biosynthesis protein PurH (492 aa).

One can recognise an MGS-like domain in the interval 1–144; sequence MKKAILSVSN…KNFKHVITVV (144 aa).

This sequence belongs to the PurH family.

It carries out the reaction (6R)-10-formyltetrahydrofolate + 5-amino-1-(5-phospho-beta-D-ribosyl)imidazole-4-carboxamide = 5-formamido-1-(5-phospho-D-ribosyl)imidazole-4-carboxamide + (6S)-5,6,7,8-tetrahydrofolate. The catalysed reaction is IMP + H2O = 5-formamido-1-(5-phospho-D-ribosyl)imidazole-4-carboxamide. Its pathway is purine metabolism; IMP biosynthesis via de novo pathway; 5-formamido-1-(5-phospho-D-ribosyl)imidazole-4-carboxamide from 5-amino-1-(5-phospho-D-ribosyl)imidazole-4-carboxamide (10-formyl THF route): step 1/1. The protein operates within purine metabolism; IMP biosynthesis via de novo pathway; IMP from 5-formamido-1-(5-phospho-D-ribosyl)imidazole-4-carboxamide: step 1/1. The chain is Bifunctional purine biosynthesis protein PurH from Staphylococcus saprophyticus subsp. saprophyticus (strain ATCC 15305 / DSM 20229 / NCIMB 8711 / NCTC 7292 / S-41).